The following is a 101-amino-acid chain: Ascorbate-specific PTS system EIIB component (101 aa).

The PTS EIIB type-2 domain occupies 3 to 96 (VRILAVCGNG…KLLEVIKAHF (94 aa)). C9 functions as the Phosphocysteine intermediate in the catalytic mechanism. At C9 the chain carries Phosphocysteine.

It is found in the cytoplasm. It catalyses the reaction N(pros)-phospho-L-histidyl-[protein] + L-ascorbate(out) = L-ascorbate 6-phosphate(in) + L-histidyl-[protein]. Functionally, the phosphoenolpyruvate-dependent sugar phosphotransferase system (sugar PTS), a major carbohydrate active transport system, catalyzes the phosphorylation of incoming sugar substrates concomitantly with their translocation across the cell membrane. The enzyme II UlaABC PTS system is involved in ascorbate transport. The protein is Ascorbate-specific PTS system EIIB component (ulaB) of Escherichia coli O6:H1 (strain CFT073 / ATCC 700928 / UPEC).